Reading from the N-terminus, the 710-residue chain is Interleukin-1 receptor-associated kinase 1 (710 aa).

The Death domain maps to 27 to 106 (MCRFYKVMDA…DIITAWHPPA (80 aa)). The residue at position 66 (T66) is a Phosphothreonine; by PKC/PRKCI. Residues 107 to 133 (PVVPPSTAAPRPSSISAGSEAGDWSPR) are disordered. The segment at 110-211 (PPSTAAPRPS…FCEISQGTCN (102 aa)) is proST region. Residues 111–123 (PSTAAPRPSSISA) show a composition bias toward low complexity. At S131 the chain carries Phosphoserine. Glycyl lysine isopeptide (Lys-Gly) (interchain with G-Cter in ubiquitin) cross-links involve residues K134 and K180. Positions 169–190 (PPLPSSAPSSTKSSPESPVSGL) are disordered. Positions 174–188 (SAPSSTKSSPESPVS) are enriched in low complexity. At T209 the chain carries Phosphothreonine; by IRAK4. Residues 212–521 (FSEELRIGEG…TQVYKRLEGL (310 aa)) enclose the Protein kinase domain. Residues 218–226 (IGEGGFGCV) and K239 contribute to the ATP site. Residue D340 is the Proton acceptor of the active site. ATP is bound by residues 342–345 (KSSN) and D358. Residue S375 is modified to Phosphoserine. The residue at position 387 (T387) is a Phosphothreonine. Disordered regions lie at residues 527-655 (WELE…SEPP) and 689-710 (FPGL…EFQS). A compositionally biased stretch (polar residues) spans 537–553 (PSPQENSYMSTTGSAQS). S553 is modified (phosphoserine). Over residues 567 to 576 (APAQAAQQLQ) the composition is skewed to low complexity. The span at 616 to 639 (SCTQGGTTRESSVRSSPGFQPTTM) shows a compositional bias: polar residues. Positions 640–654 (EGSPTGSSSLLSSEP) are enriched in low complexity.

It belongs to the protein kinase superfamily. TKL Ser/Thr protein kinase family. Pelle subfamily. As to quaternary structure, homodimer. Forms a complex with TRAF6, PELI1, IRAK4 and MYD88. Direct binding of SMAD6 to PELI1 prevents complex formation and hence negatively regulates IL1R-TLR signaling and eventually NF-kappa-B-mediated gene expression. The TRAF6-PELI1-IRAK4-MYD88 complex recruits MAP3K7/TAK1, TAB1 and TAB2 to mediate NF-kappa-B activation. Interaction with MYD88 recruits IRAK1 to the stimulated receptor complex. Interacts with TOLLIP; this interaction occurs in the cytosol prior to receptor activation. Interacts with IL1RL1. Interacts (when polyubiquitinated) with IKBKG/NEMO. Interacts with RSAD2/viperin. Interacts with IRAK1BP1. Interacts with PELI2. Interacts with ZC3H12A; this interaction increases the interaction between ZC3H12A and IKBKB/IKKB. Interacts with IRAK4. Interacts with PELI3. Interacts with PELI1 and TRAF6. Interacts with INAVA; the interaction takes place upon PRR stimulation. Interacts (via C-terminus) with NFATC4 (via N-terminus). Mg(2+) is required as a cofactor. Following recruitment on the activated receptor complex, phosphorylated on Thr-209, probably by IRAK4, resulting in a conformational change of the kinase domain, allowing further phosphorylations to take place. Thr-387 phosphorylation in the activation loop is required to achieve full enzymatic activity. Post-translationally, polyubiquitinated by TRAF6 after cell stimulation with IL-1-beta by PELI1, PELI2 and PELI3. Polyubiquitination occurs with polyubiquitin chains linked through 'Lys-63'. Ubiquitination promotes interaction with NEMO/IKBKG. Also sumoylated; leading to nuclear translocation. In terms of tissue distribution, highly expressed in liver, followed by kidney and skeletal muscle.

The protein localises to the cytoplasm. The protein resides in the nucleus. It is found in the lipid droplet. It catalyses the reaction L-seryl-[protein] + ATP = O-phospho-L-seryl-[protein] + ADP + H(+). The enzyme catalyses L-threonyl-[protein] + ATP = O-phospho-L-threonyl-[protein] + ADP + H(+). Functionally, serine/threonine-protein kinase that plays a critical role in initiating innate immune response against foreign pathogens. Involved in Toll-like receptor (TLR) and IL-1R signaling pathways. Is rapidly recruited by MYD88 to the receptor-signaling complex upon TLR activation. Association with MYD88 leads to IRAK1 phosphorylation by IRAK4 and subsequent autophosphorylation and kinase activation. Phosphorylates E3 ubiquitin ligases Pellino proteins (PELI1, PELI2 and PELI3) to promote pellino-mediated polyubiquitination of IRAK1. Then, the ubiquitin-binding domain of IKBKG/NEMO binds to polyubiquitinated IRAK1 bringing together the IRAK1-MAP3K7/TAK1-TRAF6 complex and the NEMO-IKKA-IKKB complex. In turn, MAP3K7/TAK1 activates IKKs (CHUK/IKKA and IKBKB/IKKB) leading to NF-kappa-B nuclear translocation and activation. Alternatively, phosphorylates TIRAP to promote its ubiquitination and subsequent degradation. Phosphorylates the interferon regulatory factor 7 (IRF7) to induce its activation and translocation to the nucleus, resulting in transcriptional activation of type I IFN genes, which drive the cell in an antiviral state. When sumoylated, translocates to the nucleus and phosphorylates STAT3. The chain is Interleukin-1 receptor-associated kinase 1 (Irak1) from Mus musculus (Mouse).